The sequence spans 195 residues: NADH-quinone oxidoreductase subunit B (195 aa).

Positions 74, 75, 139, and 169 each coordinate [4Fe-4S] cluster.

Belongs to the complex I 20 kDa subunit family. NDH-1 is composed of 14 different subunits. Subunits NuoB, C, D, E, F, and G constitute the peripheral sector of the complex. It depends on [4Fe-4S] cluster as a cofactor.

It localises to the cell inner membrane. The catalysed reaction is a quinone + NADH + 5 H(+)(in) = a quinol + NAD(+) + 4 H(+)(out). In terms of biological role, NDH-1 shuttles electrons from NADH, via FMN and iron-sulfur (Fe-S) centers, to quinones in the respiratory chain. The immediate electron acceptor for the enzyme in this species is believed to be ubiquinone. Couples the redox reaction to proton translocation (for every two electrons transferred, four hydrogen ions are translocated across the cytoplasmic membrane), and thus conserves the redox energy in a proton gradient. In Methylobacterium radiotolerans (strain ATCC 27329 / DSM 1819 / JCM 2831 / NBRC 15690 / NCIMB 10815 / 0-1), this protein is NADH-quinone oxidoreductase subunit B.